We begin with the raw amino-acid sequence, 139 residues long: MMQSTFAIIKPDAVSRQLTGEILAAMEASGLKIVALKRLHLSKAQAAGFYAVHRERPFFDSLTDYMSSGPVVCVVLRGEDAVPRWRALMGATNPAQAEPGTLRARYGQSLEANAVHGSDAQETAAFEIGYFFNGLEISE.

ATP contacts are provided by lysine 10, phenylalanine 58, arginine 86, threonine 92, arginine 103, and asparagine 113. The Pros-phosphohistidine intermediate role is filled by histidine 116.

The protein belongs to the NDK family. Homotetramer. Mg(2+) is required as a cofactor.

The protein localises to the cytoplasm. The catalysed reaction is a 2'-deoxyribonucleoside 5'-diphosphate + ATP = a 2'-deoxyribonucleoside 5'-triphosphate + ADP. It catalyses the reaction a ribonucleoside 5'-diphosphate + ATP = a ribonucleoside 5'-triphosphate + ADP. Functionally, major role in the synthesis of nucleoside triphosphates other than ATP. The ATP gamma phosphate is transferred to the NDP beta phosphate via a ping-pong mechanism, using a phosphorylated active-site intermediate. In Desulfovibrio desulfuricans (strain ATCC 27774 / DSM 6949 / MB), this protein is Nucleoside diphosphate kinase.